Here is a 263-residue protein sequence, read N- to C-terminus: Phosphatidylglycerol--prolipoprotein diacylglyceryl transferase (263 aa).

4 helical membrane-spanning segments follow: residues 15–35, 52–72, 83–103, and 112–132; these read ISIH…VYLA, FILL…VIFQ, IFAI…GAAV, and AIAV…AQSI. R134 contacts a 1,2-diacyl-sn-glycero-3-phospho-(1'-sn-glycerol). 3 helical membrane-spanning segments follow: residues 170 to 190, 200 to 220, and 227 to 247; these read VPTF…ILGL, GDVT…IEGM, and FVGL…GAVL.

Belongs to the Lgt family.

Its subcellular location is the cell membrane. The enzyme catalyses L-cysteinyl-[prolipoprotein] + a 1,2-diacyl-sn-glycero-3-phospho-(1'-sn-glycerol) = an S-1,2-diacyl-sn-glyceryl-L-cysteinyl-[prolipoprotein] + sn-glycerol 1-phosphate + H(+). It participates in protein modification; lipoprotein biosynthesis (diacylglyceryl transfer). In terms of biological role, catalyzes the transfer of the diacylglyceryl group from phosphatidylglycerol to the sulfhydryl group of the N-terminal cysteine of a prolipoprotein, the first step in the formation of mature lipoproteins. The chain is Phosphatidylglycerol--prolipoprotein diacylglyceryl transferase from Streptococcus thermophilus (strain CNRZ 1066).